A 92-amino-acid polypeptide reads, in one-letter code: Small ribosomal subunit protein uS19 (92 aa).

This sequence belongs to the universal ribosomal protein uS19 family.

In terms of biological role, protein S19 forms a complex with S13 that binds strongly to the 16S ribosomal RNA. This chain is Small ribosomal subunit protein uS19, found in Albidiferax ferrireducens (strain ATCC BAA-621 / DSM 15236 / T118) (Rhodoferax ferrireducens).